Reading from the N-terminus, the 199-residue chain is uncharacterized protein (199 aa).

The interval 1–48 (MSANEFYSSGQQGQYNQQNNQERTGAPNNGQYGADNGNPNGERGLFST) is disordered. S2 is subject to N-acetylserine. Over residues 7-21 (YSSGQQGQYNQQNNQ) the composition is skewed to low complexity. Polar residues predominate over residues 22–31 (ERTGAPNNGQ). A phosphoserine mark is found at S53 and S70. The disordered stretch occupies residues 89–199 (RKEHKQQEQY…RQGFNGGSRW (111 aa)). Gly residues-rich tracts occupy residues 124-163 (GGFG…GFGG), 170-179 (GGPGGQGFGG), and 186-199 (GGQG…GSRW).

The protein resides in the mitochondrion. This is an uncharacterized protein from Saccharomyces cerevisiae (strain ATCC 204508 / S288c) (Baker's yeast).